The primary structure comprises 284 residues: Bifunctional protein FolD (284 aa).

Residues 166–168 and serine 191 each bind NADP(+); that span reads GRS.

The protein belongs to the tetrahydrofolate dehydrogenase/cyclohydrolase family. In terms of assembly, homodimer.

It carries out the reaction (6R)-5,10-methylene-5,6,7,8-tetrahydrofolate + NADP(+) = (6R)-5,10-methenyltetrahydrofolate + NADPH. The enzyme catalyses (6R)-5,10-methenyltetrahydrofolate + H2O = (6R)-10-formyltetrahydrofolate + H(+). It functions in the pathway one-carbon metabolism; tetrahydrofolate interconversion. Its function is as follows. Catalyzes the oxidation of 5,10-methylenetetrahydrofolate to 5,10-methenyltetrahydrofolate and then the hydrolysis of 5,10-methenyltetrahydrofolate to 10-formyltetrahydrofolate. In Delftia acidovorans (strain DSM 14801 / SPH-1), this protein is Bifunctional protein FolD.